The primary structure comprises 709 residues: Polyribonucleotide nucleotidyltransferase (709 aa).

Mg(2+) contacts are provided by Asp486 and Asp492. A KH domain is found at 553-612 (PRIHTIKINPDKIKDVIGKGGSVIRALTEETGTTIEIEDDGTVKIAATDGEKAKHAISRI). The S1 motif domain occupies 622-690 (GRIYAGKVTR…RQGRVRLSIK (69 aa)).

The protein belongs to the polyribonucleotide nucleotidyltransferase family. As to quaternary structure, component of the RNA degradosome, which is a multiprotein complex involved in RNA processing and mRNA degradation. It depends on Mg(2+) as a cofactor.

The protein resides in the cytoplasm. The enzyme catalyses RNA(n+1) + phosphate = RNA(n) + a ribonucleoside 5'-diphosphate. Functionally, involved in mRNA degradation. Catalyzes the phosphorolysis of single-stranded polyribonucleotides processively in the 3'- to 5'-direction. This chain is Polyribonucleotide nucleotidyltransferase, found in Photorhabdus luminescens (Xenorhabdus luminescens).